We begin with the raw amino-acid sequence, 255 residues long: Triosephosphate isomerase (255 aa).

Position 9-11 (9-11 (NWK)) interacts with substrate. The Electrophile role is filled by His95. The active-site Proton acceptor is the Glu167. Substrate-binding positions include Gly173, Ser212, and 233–234 (GG).

The protein belongs to the triosephosphate isomerase family. In terms of assembly, homodimer.

It is found in the cytoplasm. It catalyses the reaction D-glyceraldehyde 3-phosphate = dihydroxyacetone phosphate. Its pathway is carbohydrate biosynthesis; gluconeogenesis. It participates in carbohydrate degradation; glycolysis; D-glyceraldehyde 3-phosphate from glycerone phosphate: step 1/1. In terms of biological role, involved in the gluconeogenesis. Catalyzes stereospecifically the conversion of dihydroxyacetone phosphate (DHAP) to D-glyceraldehyde-3-phosphate (G3P). The sequence is that of Triosephosphate isomerase from Pectobacterium atrosepticum (strain SCRI 1043 / ATCC BAA-672) (Erwinia carotovora subsp. atroseptica).